The primary structure comprises 98 residues: Large ribosomal subunit protein uL23 (98 aa).

The protein belongs to the universal ribosomal protein uL23 family. Part of the 50S ribosomal subunit. Contacts protein L29, and trigger factor when it is bound to the ribosome.

One of the early assembly proteins it binds 23S rRNA. One of the proteins that surrounds the polypeptide exit tunnel on the outside of the ribosome. Forms the main docking site for trigger factor binding to the ribosome. This Streptococcus pneumoniae serotype 19F (strain G54) protein is Large ribosomal subunit protein uL23.